We begin with the raw amino-acid sequence, 517 residues long: Amidophosphoribosyltransferase (517 aa).

Met-1 carries the post-translational modification N-acetylmethionine. A propeptide spanning residues 1 to 11 (MELEESGIREE) is cleaved from the precursor. The Nucleophile role is filled by Cys-12. The region spanning 12 to 261 (CGVFGCIASG…PGEIVEISRH (250 aa)) is the Glutamine amidotransferase type-2 domain. Cys-280 contacts [4Fe-4S] cluster. Mg(2+) is bound by residues Ser-327, Asp-389, and Asp-390. Residues Cys-426, Cys-503, and Cys-506 each coordinate [4Fe-4S] cluster.

The protein in the C-terminal section; belongs to the purine/pyrimidine phosphoribosyltransferase family. In terms of assembly, homotetramer. The cofactor is Mg(2+). It depends on [4Fe-4S] cluster as a cofactor. Expressed at a high level in brain, heart, liver and stomach.

The enzyme catalyses 5-phospho-beta-D-ribosylamine + L-glutamate + diphosphate = 5-phospho-alpha-D-ribose 1-diphosphate + L-glutamine + H2O. It functions in the pathway purine metabolism; IMP biosynthesis via de novo pathway; N(1)-(5-phospho-D-ribosyl)glycinamide from 5-phospho-alpha-D-ribose 1-diphosphate: step 1/2. With respect to regulation, activated by the substrate 5-phospho-alpha-D-ribosyl-1-pyrophosphate and inhibited by the purine ribonucleotides, the end products of purine biosynthesis. In terms of biological role, catalyzes the formation of phosphoribosylamine from phosphoribosylpyrophosphate (PRPP) and glutamine. The chain is Amidophosphoribosyltransferase (Ppat) from Rattus norvegicus (Rat).